A 75-amino-acid polypeptide reads, in one-letter code: UPF0352 protein PMI0824 (75 aa).

Belongs to the UPF0352 family.

The polypeptide is UPF0352 protein PMI0824 (Proteus mirabilis (strain HI4320)).